A 463-amino-acid polypeptide reads, in one-letter code: Lariat debranching enzyme (463 aa).

Positions 8, 10, 33, and 78 each coordinate a divalent metal cation. Positions 118-148 are lariat recognition loop; that stretch reads SGIYSAMDYKKGRYEGLPYNYKMLKSIYHTR. Residues H168, H220, and H222 each coordinate a divalent metal cation. Positions 250–324 are disordered; that stretch reads SGFSMKGLNE…QVTKFLALDK (75 aa). Residues 256–267 show a composition bias toward polar residues; the sequence is GLNEPSQERLPV. 2 stretches are compositionally biased toward basic and acidic residues: residues 276–289 and 299–323; these read DEEGSNNEQEEKQD and CRKESCKKEPSLSSSDQVTKFLALD.

It belongs to the lariat debranching enzyme family. It depends on Fe(2+) as a cofactor. Requires Zn(2+) as cofactor. Mn(2+) serves as cofactor.

The protein localises to the nucleus. It localises to the cytoplasm. Its activity is regulated as follows. Active in presence of diverse metals including Fe(2+), Zn(2+) and Mn(2+). Binds two metal cations in two adjacent alpha and beta metal-binding pockets. Cleaves the 2'-5' phosphodiester linkage at the branch point of lariat intron pre-mRNAs after splicing and converts them into linear molecules that are subsequently degraded, thereby facilitating ribonucleotide turnover. The sequence is that of Lariat debranching enzyme (dbr1) from Schizosaccharomyces pombe (strain 972 / ATCC 24843) (Fission yeast).